Reading from the N-terminus, the 312-residue chain is Protoheme IX farnesyltransferase 2 (312 aa).

8 helical membrane passes run 31–51 (VMSL…GHIH), 52–72 (PVLG…SGAL), 119–139 (ALVN…YVVI), 152–172 (IVIG…AATG), 179–199 (LLLF…LALF), 225–245 (ILLY…LGYF), 247–267 (WVYG…AIEV), and 283–303 (LFAF…LDVV).

The protein belongs to the UbiA prenyltransferase family. Protoheme IX farnesyltransferase subfamily.

It localises to the cell inner membrane. It carries out the reaction heme b + (2E,6E)-farnesyl diphosphate + H2O = Fe(II)-heme o + diphosphate. It functions in the pathway porphyrin-containing compound metabolism; heme O biosynthesis; heme O from protoheme: step 1/1. Its function is as follows. Converts heme B (protoheme IX) to heme O by substitution of the vinyl group on carbon 2 of heme B porphyrin ring with a hydroxyethyl farnesyl side group. The sequence is that of Protoheme IX farnesyltransferase 2 from Nitrobacter winogradskyi (strain ATCC 25391 / DSM 10237 / CIP 104748 / NCIMB 11846 / Nb-255).